We begin with the raw amino-acid sequence, 603 residues long: Polypeptide N-acetylgalactosaminyltransferase 10 (603 aa).

Topologically, residues 1-11 (MRRKEKRLLQA) are cytoplasmic. The helical; Signal-anchor for type II membrane protein transmembrane segment at 12–31 (VALVLAALVLLPNVGLWALY) threads the bilayer. Topologically, residues 32 to 603 (RERQPDGTPG…STVLEKFNRN (572 aa)) are lumenal. Residues 38-59 (GTPGGSGAAVAPAAGQGSHSRQ) are disordered. The span at 45–55 (AAVAPAAGQGS) shows a compositional bias: low complexity. Residues asparagine 124 and asparagine 146 are each glycosylated (N-linked (GlcNAc...) asparagine). Intrachain disulfides connect cysteine 135–cysteine 365, cysteine 356–cysteine 432, cysteine 471–cysteine 488, cysteine 523–cysteine 538, and cysteine 563–cysteine 578. The interval 144–253 (LPNTSIIIPF…VNWLPPLLDR (110 aa)) is catalytic subdomain A. Residues histidine 154, glutamate 156, aspartate 185, and arginine 214 each coordinate substrate. Aspartate 237 is a Mn(2+) binding site. A substrate-binding site is contributed by serine 238. Residue histidine 239 participates in Mn(2+) binding. Positions 311 to 373 (PFESPVMAGG…PCSRVGHIYR (63 aa)) are catalytic subdomain B. Tryptophan 342 serves as a coordination point for substrate. Histidine 370 provides a ligand contact to Mn(2+). Substrate-binding residues include arginine 373 and tyrosine 378. Positions 373–384 (RKYVPYKVPAGV) are flexible loop. The 133-residue stretch at 458–590 (AAWGEIRNVG…SSLTQQWLFE (133 aa)) folds into the Ricin B-type lectin domain. Residue asparagine 593 is glycosylated (N-linked (GlcNAc...) asparagine).

The protein belongs to the glycosyltransferase 2 family. GalNAc-T subfamily. Requires Mn(2+) as cofactor. Widely expressed. Expressed at high level in small intestine, and at intermediate levels in stomach, pancreas, ovary, thyroid gland and spleen. Weakly expressed in other tissues.

The protein resides in the golgi apparatus membrane. The catalysed reaction is L-seryl-[protein] + UDP-N-acetyl-alpha-D-galactosamine = a 3-O-[N-acetyl-alpha-D-galactosaminyl]-L-seryl-[protein] + UDP + H(+). It catalyses the reaction L-threonyl-[protein] + UDP-N-acetyl-alpha-D-galactosamine = a 3-O-[N-acetyl-alpha-D-galactosaminyl]-L-threonyl-[protein] + UDP + H(+). It functions in the pathway protein modification; protein glycosylation. In terms of biological role, catalyzes the initial reaction in O-linked oligosaccharide biosynthesis, the transfer of an N-acetyl-D-galactosamine residue to a serine or threonine residue on the protein receptor. Has activity toward Muc5Ac and EA2 peptide substrates. The chain is Polypeptide N-acetylgalactosaminyltransferase 10 (GALNT10) from Homo sapiens (Human).